A 312-amino-acid polypeptide reads, in one-letter code: Porphobilinogen deaminase (312 aa).

Cysteine 241 bears the S-(dipyrrolylmethanemethyl)cysteine mark.

Belongs to the HMBS family. Monomer. It depends on dipyrromethane as a cofactor.

The enzyme catalyses 4 porphobilinogen + H2O = hydroxymethylbilane + 4 NH4(+). It participates in porphyrin-containing compound metabolism; protoporphyrin-IX biosynthesis; coproporphyrinogen-III from 5-aminolevulinate: step 2/4. Its function is as follows. Tetrapolymerization of the monopyrrole PBG into the hydroxymethylbilane pre-uroporphyrinogen in several discrete steps. In Aliarcobacter butzleri (strain RM4018) (Arcobacter butzleri), this protein is Porphobilinogen deaminase.